We begin with the raw amino-acid sequence, 141 residues long: Nucleoside diphosphate kinase (141 aa).

ATP contacts are provided by K11, F59, R87, T93, R104, and N114. H117 (pros-phosphohistidine intermediate) is an active-site residue.

The protein belongs to the NDK family. Homotetramer. The cofactor is Mg(2+).

It is found in the cytoplasm. The enzyme catalyses a 2'-deoxyribonucleoside 5'-diphosphate + ATP = a 2'-deoxyribonucleoside 5'-triphosphate + ADP. It catalyses the reaction a ribonucleoside 5'-diphosphate + ATP = a ribonucleoside 5'-triphosphate + ADP. Functionally, major role in the synthesis of nucleoside triphosphates other than ATP. The ATP gamma phosphate is transferred to the NDP beta phosphate via a ping-pong mechanism, using a phosphorylated active-site intermediate. The sequence is that of Nucleoside diphosphate kinase from Bordetella petrii (strain ATCC BAA-461 / DSM 12804 / CCUG 43448).